A 771-amino-acid chain; its full sequence is MAQWNQLQQLDTRYLEQLHQLYSDSFPMELRQFLAPWIESQDWAYAANKESHATLVFHNLLGEIDQQYSRFLQESNVLYQHNLRRIKQFLQSRYLEKPMEIARIVARCLWEESRLLQTAATAAQQGGQATHPTAAVVTEKQQMLEQHLQDVRKRVQDLEQKMKVVENLQDDFDFNYKTLKSQGDMQDLNGNNQSVTRQKMQQLEQMLTALDQMRRGIVSELAGLLSAMEYVQKMLADEELADWKRRQQIACIGGPPNICLDRLENWITSLAESQLQTRQQIKKLEELQQKVSYKGDPIVQHRPMLEERIVELFRNLMKSAFVVERQPCMPMHPDRPLVIKTGVQFTTKVRLLVKFPELNYQLKIKVCIDKDSGDVAALRGSRKFNILGTNTKVMNMEESNNGSLSAEFKHLTLREQRCGNGGRANCDASLIVTEELHLITFETEVYHQGLKIDLETHSLPVVVISNICQMPNAWASILWYNMLTNNPKNVNFFTKPPIGTWDQVAEVLSWQFSSTTKRGLSIEQLTTLAEKLLGPGVNYSGCQITWAKFCKENMAGKGFSFWVWLDNIIDLVKKYILALWNEGYIMGFISKERERAILSTKPPGTFLLRFSESSKEGGITFTWVEKDISGKTQIQSVEPYTKQQLNSMSFAEIIMGYKIMDATNILVSPLVYLYPDIPKEEAFGKYCRSESQEHSEATDSGSAAPYLKTKFICVTPTSFSNTIDLPMSPRTLDSLMQFGNSSEGAEANAGGQFESLTFDMELTQECASSPM.

An Essential for nuclear import motif is present at residues 150–162 (DVRKRVQDLEQKM). The region spanning 580–670 (WNEGYIMGFI…DATNILVSPL (91 aa)) is the SH2 domain. Tyr706 is subject to Phosphotyrosine.

It belongs to the transcription factor STAT family. As to quaternary structure, forms a homodimer or a heterodimer with a related family member, such as STAT1. Interacts with OCAD1.

It is found in the cytoplasm. Its subcellular location is the nucleus. Its function is as follows. Transcription factor that binds to the interleukin-6 (IL-6)-responsive elements identified in the promoters of various acute-phase protein genes. The polypeptide is Signal transducer and activator of transcription 3 (STAT3) (Gallus gallus (Chicken)).